Here is a 253-residue protein sequence, read N- to C-terminus: Homeobox protein EMX2 (253 aa).

Positions P155–K214 form a DNA-binding region, homeobox. The interval Q213–D253 is disordered. Basic residues predominate over residues K225–R234.

Belongs to the EMX homeobox family. As to quaternary structure, interacts with translation initiation factor EIF4E.

It is found in the nucleus. It localises to the cell projection. The protein resides in the axon. Its function is as follows. Transcription factor, which in cooperation with EMX1, acts to generate the boundary between the roof and archipallium in the developing brain. May function in combination with OTX1/2 to specify cell fates in the developing central nervous system. In the inner ear, it controls the distribution of GPR156 at hair cell boundaries, and regulates the organization of stereociliary bundles in opposite orientations across the line of polarity reversal (LPR). This Bos taurus (Bovine) protein is Homeobox protein EMX2 (EMX2).